A 306-amino-acid chain; its full sequence is Tyrosine recombinase XerD (306 aa).

Residues 1-83 enclose the Core-binding (CB) domain; that stretch reads MGFIAQFLEM…TIKSYYEFLI (83 aa). The Tyr recombinase domain occupies 104-299; sequence KLPEILSIAQ…QTNHLKKALL (196 aa). Active-site residues include Arg145, Lys176, His251, Arg254, and His277. Tyr286 serves as the catalytic O-(3'-phospho-DNA)-tyrosine intermediate.

This sequence belongs to the 'phage' integrase family. XerD subfamily. In terms of assembly, forms a cyclic heterotetrameric complex composed of two molecules of XerC and two molecules of XerD.

It localises to the cytoplasm. Site-specific tyrosine recombinase, which acts by catalyzing the cutting and rejoining of the recombining DNA molecules. The XerC-XerD complex is essential to convert dimers of the bacterial chromosome into monomers to permit their segregation at cell division. It also contributes to the segregational stability of plasmids. The polypeptide is Tyrosine recombinase XerD (Rickettsia conorii (strain ATCC VR-613 / Malish 7)).